A 432-amino-acid polypeptide reads, in one-letter code: Trigger factor (432 aa).

The region spanning 161–246 (EDRVTIDFTG…LKKVEERELP (86 aa)) is the PPIase FKBP-type domain.

The protein belongs to the FKBP-type PPIase family. Tig subfamily. Homodimer and monomer. In vivo most of the ribosomes are in complex with monomeric TF. Uncomplexed TF, however, is in a monomer-dimer equilibrium with approximately two thirds of TF existing in a dimeric state.

It is found in the cytoplasm. It catalyses the reaction [protein]-peptidylproline (omega=180) = [protein]-peptidylproline (omega=0). Functionally, involved in protein export. Acts as a chaperone by maintaining the newly synthesized protein in an open conformation. Functions as a peptidyl-prolyl cis-trans isomerase. This chain is Trigger factor, found in Shigella dysenteriae serotype 1 (strain Sd197).